Reading from the N-terminus, the 91-residue chain is Small ribosomal subunit protein bS18 (91 aa).

Belongs to the bacterial ribosomal protein bS18 family. In terms of assembly, part of the 30S ribosomal subunit. Forms a tight heterodimer with protein bS6.

Binds as a heterodimer with protein bS6 to the central domain of the 16S rRNA, where it helps stabilize the platform of the 30S subunit. This is Small ribosomal subunit protein bS18 from Paraburkholderia phymatum (strain DSM 17167 / CIP 108236 / LMG 21445 / STM815) (Burkholderia phymatum).